The sequence spans 391 residues: 3-ketoacyl-CoA thiolase (391 aa).

The Acyl-thioester intermediate role is filled by Cys-95. Active-site proton acceptor residues include His-347 and Cys-377.

It belongs to the thiolase-like superfamily. Thiolase family. As to quaternary structure, heterotetramer of two alpha chains (FadB) and two beta chains (FadA).

Its subcellular location is the cytoplasm. It catalyses the reaction an acyl-CoA + acetyl-CoA = a 3-oxoacyl-CoA + CoA. It participates in lipid metabolism; fatty acid beta-oxidation. Its function is as follows. Catalyzes the final step of fatty acid oxidation in which acetyl-CoA is released and the CoA ester of a fatty acid two carbons shorter is formed. The sequence is that of 3-ketoacyl-CoA thiolase from Saccharophagus degradans (strain 2-40 / ATCC 43961 / DSM 17024).